We begin with the raw amino-acid sequence, 238 residues long: uncharacterized protein (238 aa).

Residues 219 to 238 form a disordered region; sequence EESINNNVDDTDDIDNDNFI. Acidic residues predominate over residues 227-238; sequence DDTDDIDNDNFI.

This is an uncharacterized protein from Buchnera aphidicola subsp. Acyrthosiphon pisum (strain APS) (Acyrthosiphon pisum symbiotic bacterium).